Here is a 917-residue protein sequence, read N- to C-terminus: Isoleucine--tRNA ligase (917 aa).

The 'HIGH' region signature appears at 57–67 (PYANGNLHMGH). Glu554 serves as a coordination point for L-isoleucyl-5'-AMP. Positions 595–599 (KMSKS) match the 'KMSKS' region motif. Lys598 contributes to the ATP binding site. The Zn(2+) site is built by Cys886, Cys889, Cys906, and Cys909.

This sequence belongs to the class-I aminoacyl-tRNA synthetase family. IleS type 1 subfamily. Monomer. The cofactor is Zn(2+).

Its subcellular location is the cytoplasm. The enzyme catalyses tRNA(Ile) + L-isoleucine + ATP = L-isoleucyl-tRNA(Ile) + AMP + diphosphate. Its function is as follows. Catalyzes the attachment of isoleucine to tRNA(Ile). As IleRS can inadvertently accommodate and process structurally similar amino acids such as valine, to avoid such errors it has two additional distinct tRNA(Ile)-dependent editing activities. One activity is designated as 'pretransfer' editing and involves the hydrolysis of activated Val-AMP. The other activity is designated 'posttransfer' editing and involves deacylation of mischarged Val-tRNA(Ile). This chain is Isoleucine--tRNA ligase, found in Staphylococcus aureus (strain Mu3 / ATCC 700698).